Consider the following 217-residue polypeptide: Urease accessory protein UreG (217 aa).

GTP is bound at residue glycine 13 to threonine 20.

It belongs to the SIMIBI class G3E GTPase family. UreG subfamily. In terms of assembly, homodimer. UreD, UreF and UreG form a complex that acts as a GTP-hydrolysis-dependent molecular chaperone, activating the urease apoprotein by helping to assemble the nickel containing metallocenter of UreC. The UreE protein probably delivers the nickel.

It localises to the cytoplasm. Facilitates the functional incorporation of the urease nickel metallocenter. This process requires GTP hydrolysis, probably effectuated by UreG. The chain is Urease accessory protein UreG from Frankia alni (strain DSM 45986 / CECT 9034 / ACN14a).